The chain runs to 323 residues: Mitochondrial glutamate carrier 1 (323 aa).

Solcar repeat units lie at residues Ile-6 to Gln-93, Leu-101 to Leu-214, and Ser-223 to Glu-312. Transmembrane regions (helical) follow at residues Leu-12–Ala-32, Tyr-62–Ile-82, Met-107–Leu-127, Gly-189–Ala-209, Ser-223–Val-243, and Ala-292–Glu-312.

It belongs to the mitochondrial carrier (TC 2.A.29) family. Detected in insulin-secreting beta-cells and pancreatic islets (at the protein level).

The protein localises to the mitochondrion inner membrane. The enzyme catalyses L-glutamate(in) + H(+)(in) = L-glutamate(out) + H(+)(out). Functionally, mitochondrial glutamate/H(+) symporter. Responsible for the transport of glutamate from the cytosol into the mitochondrial matrix with the concomitant import of a proton. Plays a role in the control of glucose-stimulated insulin secretion. The chain is Mitochondrial glutamate carrier 1 from Rattus norvegicus (Rat).